Consider the following 357-residue polypeptide: Thiamine thiazole synthase, chloroplastic (357 aa).

Residues Ala-102, 123–124 (EQ), Gly-131, and Val-196 contribute to the substrate site. 2,3-didehydroalanine (Cys) is present on Cys-233. Substrate contacts are provided by residues Asp-235, His-250, Met-304, and 314–316 (RMG).

The protein belongs to the THI4 family. Homooctamer. Requires Fe cation as cofactor. During the catalytic reaction, a sulfide is transferred from Cys-233 to a reaction intermediate, generating a dehydroalanine residue.

It localises to the plastid. Its subcellular location is the chloroplast. The enzyme catalyses [ADP-thiazole synthase]-L-cysteine + glycine + NAD(+) = [ADP-thiazole synthase]-dehydroalanine + ADP-5-ethyl-4-methylthiazole-2-carboxylate + nicotinamide + 3 H2O + 2 H(+). Involved in biosynthesis of the thiamine precursor thiazole. Catalyzes the conversion of NAD and glycine to adenosine diphosphate 5-(2-hydroxyethyl)-4-methylthiazole-2-carboxylic acid (ADT), an adenylated thiazole intermediate. The reaction includes an iron-dependent sulfide transfer from a conserved cysteine residue of the protein to a thiazole intermediate. The enzyme can only undergo a single turnover, which suggests it is a suicide enzyme. May have additional roles in adaptation to various stress conditions and in DNA damage tolerance. The polypeptide is Thiamine thiazole synthase, chloroplastic (Chlamydomonas reinhardtii (Chlamydomonas smithii)).